The sequence spans 271 residues: MSHLLRKPQANELSQGVKLVHEVKKSNSDLSYVEFKVLDLAPGSSYEESLSKQECCIVALTGKITATDHEQTFENIGTRESVFERKPTDSVYVSNDRKFGITAVTEARVALCYSPSENQLPTKLIKAEDNGIENRGKFSNKRTVHNILPDSDPSANSLLVVEVYTESGNWSSYPPHKHDQDNLPEESFLEETYYHELDPQQGFVFQRVYTDDRSIDETMTVENGNVVIVPAGYHPVGVPDGYTSYYLNVMAGPTRKWKFHNDPDHEWILER.

It belongs to the isomerase IolB family.

It catalyses the reaction 5-deoxy-D-glucuronate = 5-dehydro-2-deoxy-D-gluconate. It functions in the pathway polyol metabolism; myo-inositol degradation into acetyl-CoA; acetyl-CoA from myo-inositol: step 4/7. Involved in the isomerization of 5-deoxy-glucuronate (5DG) to 5-dehydro-2-deoxy-D-gluconate (DKG or 2-deoxy-5-keto-D-gluconate). The protein is 5-deoxy-glucuronate isomerase of Bacillus licheniformis (strain ATCC 14580 / DSM 13 / JCM 2505 / CCUG 7422 / NBRC 12200 / NCIMB 9375 / NCTC 10341 / NRRL NRS-1264 / Gibson 46).